Here is a 106-residue protein sequence, read N- to C-terminus: CRISPR-associated endoribonuclease Cas2 (106 aa).

Residue Asp22 participates in Mg(2+) binding.

It belongs to the CRISPR-associated endoribonuclease Cas2 protein family. In terms of assembly, homodimer, forms a heterotetramer with a Cas1 homodimer. Mg(2+) serves as cofactor.

CRISPR (clustered regularly interspaced short palindromic repeat), is an adaptive immune system that provides protection against mobile genetic elements (viruses, transposable elements and conjugative plasmids). CRISPR clusters contain sequences complementary to antecedent mobile elements and target invading nucleic acids. CRISPR clusters are transcribed and processed into CRISPR RNA (crRNA). Functions as a ssRNA-specific endoribonuclease. Involved in the integration of spacer DNA into the CRISPR cassette. The protein is CRISPR-associated endoribonuclease Cas2 of Fusobacterium nucleatum subsp. nucleatum (strain ATCC 25586 / DSM 15643 / BCRC 10681 / CIP 101130 / JCM 8532 / KCTC 2640 / LMG 13131 / VPI 4355).